We begin with the raw amino-acid sequence, 142 residues long: Translation initiation factor 2 subunit beta (142 aa).

Belongs to the eIF-2-beta/eIF-5 family. In terms of assembly, heterotrimer composed of an alpha, a beta and a gamma chain.

Its function is as follows. eIF-2 functions in the early steps of protein synthesis by forming a ternary complex with GTP and initiator tRNA. This is Translation initiation factor 2 subunit beta from Methanosphaera stadtmanae (strain ATCC 43021 / DSM 3091 / JCM 11832 / MCB-3).